The chain runs to 379 residues: AT-rich binding protein (379 aa).

A C2H2-type 1 zinc finger spans residues 29-52 (IVCHTCQEELQTQDQFWKHIQDEH). The span at 114–124 (EQREVELHEAH) shows a compositional bias: basic and acidic residues. Disordered regions lie at residues 114-148 (EQRE…DAAK) and 221-267 (PTAS…STTL). Composition is skewed to low complexity over residues 125-143 (QQQQ…QQQQ), 223-242 (ASFV…TTPP), and 249-262 (QQQQ…QQQQ). 2 C2H2-type zinc fingers span residues 312-336 (YICD…RVVH) and 342-365 (FNCD…KKKH).

It is found in the nucleus. In terms of biological role, may be a transcription factor for genes having (A+T) stretches in their promoter and/or enhancer regions. Binds to AT rich DNA. The sequence is that of AT-rich binding protein from Drosophila willistoni (Fruit fly).